A 179-amino-acid polypeptide reads, in one-letter code: Shikimate kinase (179 aa).

An ATP-binding site is contributed by 15–20 (GAGKTS). Residue Thr19 coordinates Mg(2+). Residues Asp37, Arg61, and Gly83 each contribute to the substrate site. An ATP-binding site is contributed by Arg122. Residue Arg142 participates in substrate binding.

Belongs to the shikimate kinase family. In terms of assembly, monomer. Requires Mg(2+) as cofactor.

It localises to the cytoplasm. The catalysed reaction is shikimate + ATP = 3-phosphoshikimate + ADP + H(+). The protein operates within metabolic intermediate biosynthesis; chorismate biosynthesis; chorismate from D-erythrose 4-phosphate and phosphoenolpyruvate: step 5/7. In terms of biological role, catalyzes the specific phosphorylation of the 3-hydroxyl group of shikimic acid using ATP as a cosubstrate. The protein is Shikimate kinase of Coxiella burnetii (strain RSA 331 / Henzerling II).